Here is a 489-residue protein sequence, read N- to C-terminus: Inactive receptor-like serine/threonine-protein kinase At2g40270 (489 aa).

An N-terminal signal peptide occupies residues 1-23; that stretch reads MLFKMRSFVAFVLLLSWFGSCCS. The Extracellular segment spans residues 24–139; that stretch reads LKDQAVDFLK…PRNSHSSVPL (116 aa). A disordered region spans residues 67–130; that stretch reads KDLPSRKDRK…SAPLANSPIP (64 aa). A compositionally biased stretch (low complexity) spans 81–90; sequence AATTTPSSSP. Polar residues predominate over residues 99 to 116; sequence TKASTVSEPQKRSSTQDV. The segment covering 117-130 has biased composition (low complexity); sequence SPSPSAPLANSPIP. A helical transmembrane segment spans residues 140-160; the sequence is VVGCVGGAFFLLLVATGLYFF. Residues 161-489 are Cytoplasmic-facing; sequence TSKAGKTVNP…WAELEVLSTA (329 aa). Positions 200-460 constitute a Protein kinase domain; the sequence is EDFSNVIGSC…PTMQEVTGWL (261 aa).

It belongs to the protein kinase superfamily. Ser/Thr protein kinase family.

The protein localises to the cell membrane. The protein is Inactive receptor-like serine/threonine-protein kinase At2g40270 of Arabidopsis thaliana (Mouse-ear cress).